The following is a 767-amino-acid chain: Photosystem I P700 chlorophyll a apoprotein A1 (767 aa).

The next 8 membrane-spanning stretches (helical) occupy residues Ile-72–Ala-95, Leu-158–His-181, Leu-197–Leu-221, Ile-305–Tyr-323, Trp-364–Tyr-387, Ile-403–Ile-429, Ala-451–His-473, and Phe-548–Leu-566. [4Fe-4S] cluster-binding residues include Cys-590 and Cys-599. Transmembrane regions (helical) follow at residues His-606 to Trp-627 and Thr-681 to Phe-703. Position 692 (His-692) interacts with chlorophyll a'. The chlorophyll a site is built by Met-700 and Tyr-708. Trp-709 is a phylloquinone binding site. A helical transmembrane segment spans residues Ala-741–Ala-761.

This sequence belongs to the PsaA/PsaB family. In terms of assembly, the PsaA/B heterodimer binds the P700 chlorophyll special pair and subsequent electron acceptors. PSI consists of a core antenna complex that captures photons, and an electron transfer chain that converts photonic excitation into a charge separation. The cyanobacterial PSI reaction center is composed of one copy each of PsaA,B,C,D,E,F,I,J,K,L,M and X, and forms trimeric complexes. PSI electron transfer chain: 5 chlorophyll a, 1 chlorophyll a', 2 phylloquinones and 3 4Fe-4S clusters. PSI core antenna: 90 chlorophyll a, 22 carotenoids, 3 phospholipids and 1 galactolipid. P700 is a chlorophyll a/chlorophyll a' dimer, A0 is one or more chlorophyll a, A1 is one or both phylloquinones and FX is a shared 4Fe-4S iron-sulfur center. serves as cofactor.

The protein localises to the cellular thylakoid membrane. The enzyme catalyses reduced [plastocyanin] + hnu + oxidized [2Fe-2S]-[ferredoxin] = oxidized [plastocyanin] + reduced [2Fe-2S]-[ferredoxin]. In terms of biological role, psaA and PsaB bind P700, the primary electron donor of photosystem I (PSI), as well as the electron acceptors A0, A1 and FX. PSI is a plastocyanin/cytochrome c6-ferredoxin oxidoreductase, converting photonic excitation into a charge separation, which transfers an electron from the donor P700 chlorophyll pair to the spectroscopically characterized acceptors A0, A1, FX, FA and FB in turn. Oxidized P700 is reduced on the lumenal side of the thylakoid membrane by plastocyanin or cytochrome c6. The polypeptide is Photosystem I P700 chlorophyll a apoprotein A1 (Synechococcus sp. (strain CC9311)).